Consider the following 446-residue polypeptide: Nitrate/nitrite binding protein NrtA (446 aa).

A signal peptide spans 1–28; it reads MSNFSRSTRRKFMFTAGAAAIGGVVLHG. Cys29 carries N-palmitoyl cysteine lipidation. Cys29 carries S-diacylglycerol cysteine lipidation. Trp102, Gln155, His196, Gly240, and Lys269 together coordinate nitrate.

This sequence belongs to the CmpA/NrtA family. As to quaternary structure, the complex is composed of two ATP-binding proteins (NrtC and NrtD), two transmembrane proteins (NrtB) and a solute-binding protein (NrtA).

The protein resides in the cell inner membrane. Functionally, part of the ABC transporter complex NrtABCD involved in nitrate uptake. The complex is probably also involved in nitrite transport. NrtA is the substrate-binding protein. Binds nitrate. The chain is Nitrate/nitrite binding protein NrtA from Synechocystis sp. (strain ATCC 27184 / PCC 6803 / Kazusa).